A 102-amino-acid chain; its full sequence is Large ribosomal subunit protein bL21 (102 aa).

The protein belongs to the bacterial ribosomal protein bL21 family. In terms of assembly, part of the 50S ribosomal subunit. Contacts protein L20.

Its function is as follows. This protein binds to 23S rRNA in the presence of protein L20. This Stenotrophomonas maltophilia (strain K279a) protein is Large ribosomal subunit protein bL21.